We begin with the raw amino-acid sequence, 395 residues long: S-adenosylmethionine synthase 5 (395 aa).

Residue glutamate 10 participates in Mg(2+) binding. Histidine 16 provides a ligand contact to ATP. A K(+)-binding site is contributed by glutamate 44. L-methionine contacts are provided by glutamate 57 and glutamine 100. ATP is bound by residues 168–170 (DGK), 236–239 (SGRF), aspartate 247, 253–254 (RK), alanine 270, lysine 274, and lysine 278. Aspartate 247 contacts L-methionine. An L-methionine-binding site is contributed by lysine 278.

This sequence belongs to the AdoMet synthase family. As to quaternary structure, homotetramer. It depends on Mn(2+) as a cofactor. Mg(2+) serves as cofactor. Co(2+) is required as a cofactor. Requires K(+) as cofactor.

The protein localises to the cytoplasm. It carries out the reaction L-methionine + ATP + H2O = S-adenosyl-L-methionine + phosphate + diphosphate. Its pathway is amino-acid biosynthesis; S-adenosyl-L-methionine biosynthesis; S-adenosyl-L-methionine from L-methionine: step 1/1. Functionally, catalyzes the formation of S-adenosylmethionine from methionine and ATP. The reaction comprises two steps that are both catalyzed by the same enzyme: formation of S-adenosylmethionine (AdoMet) and triphosphate, and subsequent hydrolysis of the triphosphate. In Populus trichocarpa (Western balsam poplar), this protein is S-adenosylmethionine synthase 5 (METK5).